The chain runs to 947 residues: Translation initiation factor IF-2 (947 aa).

Residues 69–353 (RRRKEVPQEE…TPKPQKKTEV (285 aa)) form a disordered region. The span at 81–108 (APPAAAEEPSSVDTAVAEEAPAEEVQPV) shows a compositional bias: low complexity. Residues 139-155 (PVVEEVIAEPAVEEVVE) show a composition bias toward acidic residues. Basic and acidic residues-rich tracts occupy residues 215–226 (VTKEKPKVEKAT) and 246–262 (KRQERAKNGKGRPERPK). Positions 264–284 (AKPSGGPAPRAKEAAPQAAVP) are enriched in low complexity. Residues 327-337 (QVYEPERDERR) are compositionally biased toward basic and acidic residues. Residues 338–348 (MRRGKKTPKPQ) show a composition bias toward basic residues. Residues 447–616 (PRPPVVTIMG…LLQAEVLELK (170 aa)) enclose the tr-type G domain. The segment at 456 to 463 (GHVDHGKT) is G1. 456-463 (GHVDHGKT) contributes to the GTP binding site. A G2 region spans residues 481–485 (GITQH). Residues 502-505 (DTPG) form a G3 region. GTP-binding positions include 502 to 506 (DTPGH) and 556 to 559 (NKMD). Positions 556–559 (NKMD) are G4. The G5 stretch occupies residues 592-594 (SAK).

The protein belongs to the TRAFAC class translation factor GTPase superfamily. Classic translation factor GTPase family. IF-2 subfamily.

Its subcellular location is the cytoplasm. Functionally, one of the essential components for the initiation of protein synthesis. Protects formylmethionyl-tRNA from spontaneous hydrolysis and promotes its binding to the 30S ribosomal subunits. Also involved in the hydrolysis of GTP during the formation of the 70S ribosomal complex. This chain is Translation initiation factor IF-2, found in Syntrophotalea carbinolica (strain DSM 2380 / NBRC 103641 / GraBd1) (Pelobacter carbinolicus).